Consider the following 148-residue polypeptide: Large ribosomal subunit protein uL15 (148 aa).

The segment covering M1 to K10 has biased composition (basic and acidic residues). Residues M1–R42 form a disordered region. Basic residues predominate over residues G11–R22. Positions G23–Q36 are enriched in gly residues.

This sequence belongs to the universal ribosomal protein uL15 family. In terms of assembly, part of the 50S ribosomal subunit.

In terms of biological role, binds to the 23S rRNA. This Ureaplasma parvum serovar 3 (strain ATCC 27815 / 27 / NCTC 11736) protein is Large ribosomal subunit protein uL15.